Reading from the N-terminus, the 272-residue chain is Indole-3-glycerol phosphate synthase (272 aa).

It belongs to the TrpC family.

The enzyme catalyses 1-(2-carboxyphenylamino)-1-deoxy-D-ribulose 5-phosphate + H(+) = (1S,2R)-1-C-(indol-3-yl)glycerol 3-phosphate + CO2 + H2O. It functions in the pathway amino-acid biosynthesis; L-tryptophan biosynthesis; L-tryptophan from chorismate: step 4/5. The polypeptide is Indole-3-glycerol phosphate synthase (Mycobacterium ulcerans (strain Agy99)).